A 217-amino-acid chain; its full sequence is 7-cyano-7-deazaguanine synthase (217 aa).

7–17 (LSGGMDSTTLL) is a binding site for ATP. The Zn(2+) site is built by C183, C191, C194, and C197.

This sequence belongs to the QueC family. Zn(2+) serves as cofactor.

It catalyses the reaction 7-carboxy-7-deazaguanine + NH4(+) + ATP = 7-cyano-7-deazaguanine + ADP + phosphate + H2O + H(+). The protein operates within purine metabolism; 7-cyano-7-deazaguanine biosynthesis. Catalyzes the ATP-dependent conversion of 7-carboxy-7-deazaguanine (CDG) to 7-cyano-7-deazaguanine (preQ(0)). In Methanoregula boonei (strain DSM 21154 / JCM 14090 / 6A8), this protein is 7-cyano-7-deazaguanine synthase.